The chain runs to 348 residues: GMP reductase 2 (348 aa).

NADP(+) is bound by residues Ser-26–Arg-27, Lys-78, Asp-129–Ala-131, and Ile-180–Gly-181. Residues Gly-181, Gly-183, and Cys-186 each contribute to the K(+) site. Residue Cys-186 is the Thioimidate intermediate of the active site. Catalysis depends on Thr-188, which acts as the Proton donor/acceptor. A K(+)-binding site is contributed by Arg-189. Residues Asp-219 to Gly-221, Gly-242 to Gly-243, Gly-268 to Ser-270, and Arg-286 to Gly-290 contribute to the GMP site. Residues Met-269 and Tyr-285–Arg-286 contribute to the NADP(+) site. Lys-291 bears the N6-acetyllysine mark. Residue Ser-314–Thr-317 participates in NADP(+) binding.

The protein belongs to the IMPDH/GMPR family. GuaC type 1 subfamily. As to quaternary structure, homotetramer.

It catalyses the reaction IMP + NH4(+) + NADP(+) = GMP + NADPH + 2 H(+). Catalyzes the irreversible NADPH-dependent deamination of GMP to IMP. It functions in the conversion of nucleobase, nucleoside and nucleotide derivatives of G to A nucleotides, and in maintaining the intracellular balance of A and G nucleotides. Plays a role in modulating cellular differentiation. The polypeptide is GMP reductase 2 (Bos taurus (Bovine)).